A 169-amino-acid chain; its full sequence is 4-hydroxylaminobenzoate lyase (169 aa).

This sequence belongs to the PnbB family.

It carries out the reaction 4-hydroxylaminobenzoate + H2O + H(+) = 3,4-dihydroxybenzoate + NH4(+). Its function is as follows. Lyase involved in the degradation of nitroaromatic compounds. Catalyzes the conversion of 4-hydroxylaminobenzoate to 3,4-dihydroxybenzoate (protocatechuate). The sequence is that of 4-hydroxylaminobenzoate lyase from Nocardioides sp. (strain LMS-CY).